A 303-amino-acid polypeptide reads, in one-letter code: Oxygen-dependent coproporphyrinogen-III oxidase (303 aa).

Serine 93 lines the substrate pocket. Histidine 97 and histidine 107 together coordinate a divalent metal cation. The Proton donor role is filled by histidine 107. 109-111 provides a ligand contact to substrate; it reads NVR. 2 residues coordinate a divalent metal cation: histidine 146 and histidine 176. The tract at residues 241 to 276 is important for dimerization; sequence YVEFNLVYDRGTLFGLQSGGRTESILMSLPPQVRWG. Residue 259–261 participates in substrate binding; the sequence is GGR.

Belongs to the aerobic coproporphyrinogen-III oxidase family. Homodimer. It depends on a divalent metal cation as a cofactor.

The protein localises to the cytoplasm. The catalysed reaction is coproporphyrinogen III + O2 + 2 H(+) = protoporphyrinogen IX + 2 CO2 + 2 H2O. The protein operates within porphyrin-containing compound metabolism; protoporphyrin-IX biosynthesis; protoporphyrinogen-IX from coproporphyrinogen-III (O2 route): step 1/1. Involved in the heme biosynthesis. Catalyzes the aerobic oxidative decarboxylation of propionate groups of rings A and B of coproporphyrinogen-III to yield the vinyl groups in protoporphyrinogen-IX. This is Oxygen-dependent coproporphyrinogen-III oxidase from Pseudomonas putida (strain GB-1).